The chain runs to 199 residues: LIM domain-containing protein E (199 aa).

Residues 5–65 (VKCGACAKTA…PVHTPKVSAT (61 aa)) form the LIM zinc-binding domain. A disordered region spans residues 134 to 199 (YAVFGADGQP…EEEQQYEEEQ (66 aa)). Low complexity-rich tracts occupy residues 146 to 155 (EQQEQQQYTE) and 163 to 174 (EEQQYQEEQQQY). Residues 175–199 (QEEEQQYQEEEQQYQEEEQQYEEEQ) show a composition bias toward acidic residues.

May interact with rac1A.

It localises to the cytoplasm. It is found in the cell cortex. The protein resides in the nucleus. Its subcellular location is the cell projection. The protein localises to the lamellipodium. It localises to the filopodium. It is found in the cytoskeleton. Associates with the actin cytoskeleton and may regulate actin polymerization in lamellipodia, through a rac1-dependent signaling pathway. May play a role in cell motility. Involved in cytokinesis by regulating the microtubule system and linking it to the cortical actin network. In Dictyostelium discoideum (Social amoeba), this protein is LIM domain-containing protein E (limE).